A 170-amino-acid polypeptide reads, in one-letter code: Translationally-controlled tumor protein homolog (170 aa).

One can recognise a TCTP domain in the interval 1–170 (MLIYSDIITG…WKHGLKETKV (170 aa)).

Belongs to the TCTP family.

The protein localises to the cytoplasm. It localises to the cytoskeleton. Involved in protein synthesis. Involved in microtubule stabilization. This chain is Translationally-controlled tumor protein homolog, found in Neurospora crassa (strain ATCC 24698 / 74-OR23-1A / CBS 708.71 / DSM 1257 / FGSC 987).